Consider the following 402-residue polypeptide: Phosphoglycerate kinase (402 aa).

Substrate contacts are provided by residues 21-23 (DFN), Arg36, 59-62 (HLGR), Arg118, and Arg151. ATP is bound by residues Lys201, Gly293, Glu324, and 353–356 (GGDS).

Belongs to the phosphoglycerate kinase family. In terms of assembly, monomer.

The protein localises to the cytoplasm. The catalysed reaction is (2R)-3-phosphoglycerate + ATP = (2R)-3-phospho-glyceroyl phosphate + ADP. It participates in carbohydrate degradation; glycolysis; pyruvate from D-glyceraldehyde 3-phosphate: step 2/5. This Thermosipho africanus (strain TCF52B) protein is Phosphoglycerate kinase.